The primary structure comprises 596 residues: MSRNDDEQARGSRWERETQDLSTQVEYLQEELALARRKLTETPGHVRLLEERLAATKAQVERMSEQNERLVATLKDAREQIVTLKEEIDRLAQPPSGYGVFIEAREDGTVDVFTGGRKMRVALSPSIEPESLRRGQEVLLNDALNVVESLGFERAGDVVTLKELIESDTGHPDRALVTSHADEERVVHLADSLTNAPLRAGDSLLVEPRSGYAYERIQKSEVEELVLEEVPDVDYESIGGLDGQIELIRDAVELPFLHADLFAEYELRPPKGVLLYGPPGCGKTLIAKAVANSLAKKVAEARGDDFTGGDRAKSYFLNIKGPELLNKYVGETERHIRLVFQRAREKASEGQPVIVFFDEMDSVFRTRGSGVSSDVENTIVPQLLSEIDGVEGLENVIVIGASNREDMIDPAILRPGRLDVKIKIERPDAESARDIFSKYVTTKLPLNEADLAEQGGSREACVQEMIQQAVERMYTETEENRFLEVTYADGDKEVLYFKDFNSGAMIQNIVDRAKKMAIKEFLNSQRKGLRLQHLLDACVDEFRENEDLPNTTNPDDWARISGKKGERIVYIRTLVSGKGDESGRSIDTVSNTGQYL.

Positions 12 to 94 (SRWERETQDL…KEEIDRLAQP (83 aa)) form a coiled coil. 280 to 285 (GCGKTL) contacts ATP. The segment at 595–596 (YL) is docks into pockets in the proteasome alpha-ring.

This sequence belongs to the AAA ATPase family. As to quaternary structure, homohexamer. Assembles into a hexameric ring structure that caps the 20S proteasome core. Strongly interacts with the prokaryotic ubiquitin-like protein Pup through a hydrophobic interface; the interacting region of ARC lies in its N-terminal coiled-coil domain. There is one Pup binding site per ARC hexamer ring. Upon ATP-binding, the C-terminus of ARC interacts with the alpha-rings of the proteasome core, possibly by binding to the intersubunit pockets.

It participates in protein degradation; proteasomal Pup-dependent pathway. ATPase which is responsible for recognizing, binding, unfolding and translocation of pupylated proteins into the bacterial 20S proteasome core particle. May be essential for opening the gate of the 20S proteasome via an interaction with its C-terminus, thereby allowing substrate entry and access to the site of proteolysis. Thus, the C-termini of the proteasomal ATPase may function like a 'key in a lock' to induce gate opening and therefore regulate proteolysis. In Stackebrandtia nassauensis (strain DSM 44728 / CIP 108903 / NRRL B-16338 / NBRC 102104 / LLR-40K-21), this protein is Proteasome-associated ATPase.